The primary structure comprises 463 residues: V-type ATP synthase beta chain (463 aa).

Belongs to the ATPase alpha/beta chains family.

Its function is as follows. Produces ATP from ADP in the presence of a proton gradient across the membrane. The V-type beta chain is a regulatory subunit. The chain is V-type ATP synthase beta chain from Halothermothrix orenii (strain H 168 / OCM 544 / DSM 9562).